Consider the following 436-residue polypeptide: Trigger factor (436 aa).

In terms of domain architecture, PPIase FKBP-type spans 161-246 (DDRVTVDFVG…VNKVEGLSLP (86 aa)).

It belongs to the FKBP-type PPIase family. Tig subfamily.

It localises to the cytoplasm. The catalysed reaction is [protein]-peptidylproline (omega=180) = [protein]-peptidylproline (omega=0). Its function is as follows. Involved in protein export. Acts as a chaperone by maintaining the newly synthesized protein in an open conformation. Functions as a peptidyl-prolyl cis-trans isomerase. This chain is Trigger factor, found in Pseudoalteromonas atlantica (strain T6c / ATCC BAA-1087).